Reading from the N-terminus, the 313-residue chain is MLSTAAEEDPEGGSRETNNGGETTPDMQWRSWIIPIVVIANVVVFVVVMYYNDCPHKSHRCLAKFLGRFSFESFKSNPLLGPSSSTLEKMGALAWGKIVHKRQVWRLLTCMWLHAGVIHLLANMCCVAYIGVRLEQQFGFVRVGTIYLVSGFCGSILSCLFLEDAISVGASSALFGLLGAMLSELLINWTTYDNKGVAIVMLLVIVGVNLGLGTLPPVDNFAHIGGFFGGFLLGFLLLIHPQFEWEENQVSLMPGTIVKPKYNTCQLVLCIVASIVFVAGFTSGLVILFRGDSLNRYCKWCHKLSYSSKSQWT.

Acidic residues predominate over residues 1 to 11; it reads MLSTAAEEDPE. Positions 1-24 are disordered; the sequence is MLSTAAEEDPEGGSRETNNGGETT. The segment covering 15–24 has biased composition (polar residues); sequence RETNNGGETT. 7 consecutive transmembrane segments (helical) span residues 31–51, 112–132, 143–163, 166–186, 196–216, 221–241, and 269–289; these read SWII…VMYY, WLHA…YIGV, VGTI…LFLE, ISVG…SELL, GVAI…GTLP, FAHI…LIHP, and LCIV…VILF. Residue serine 171 is the Nucleophile of the active site. The active-site Charge relay system is histidine 223.

It belongs to the peptidase S54 family.

Its subcellular location is the membrane. It carries out the reaction Cleaves type-1 transmembrane domains using a catalytic dyad composed of serine and histidine that are contributed by different transmembrane domains.. Its function is as follows. Probable rhomboid-type serine protease that catalyzes intramembrane proteolysis. May function in embryo development. The polypeptide is RHOMBOID-like protein 7 (Arabidopsis thaliana (Mouse-ear cress)).